The following is a 105-amino-acid chain: DNA-binding protein HU (105 aa).

Belongs to the bacterial histone-like protein family.

Histone-like DNA-binding protein which is capable of wrapping DNA to stabilize it, and thus to prevent its denaturation under extreme environmental conditions. The polypeptide is DNA-binding protein HU (hup) (Treponema pallidum (strain Nichols)).